Consider the following 511-residue polypeptide: Lysine--tRNA ligase 2 (511 aa).

Residues 1–11 (MTMEINNTDPS) are compositionally biased toward polar residues. A disordered region spans residues 1-21 (MTMEINNTDPSENMPLPDDVD). Positions 421 and 428 each coordinate Mg(2+).

The protein belongs to the class-II aminoacyl-tRNA synthetase family. In terms of assembly, homodimer. Requires Mg(2+) as cofactor.

It is found in the cytoplasm. It catalyses the reaction tRNA(Lys) + L-lysine + ATP = L-lysyl-tRNA(Lys) + AMP + diphosphate. The polypeptide is Lysine--tRNA ligase 2 (Methanosarcina acetivorans (strain ATCC 35395 / DSM 2834 / JCM 12185 / C2A)).